Consider the following 765-residue polypeptide: Nucleolar transcription factor 1 (765 aa).

Met1 carries the N-acetylmethionine modification. The interval 1-21 (MNGEADCPTDLEMAAPKGQDR) is disordered. 2 DNA-binding regions (HMG box) span residues 112–180 (PKKP…ARFR) and 196–264 (PEKP…RDYI). Thr201 carries the post-translational modification Phosphothreonine. Phosphoserine is present on residues Ser273, Ser336, and Ser364. Residues 298–362 (TKPPPNSYSL…DYEVELLRFL (65 aa)) constitute a DNA-binding region (HMG box 3). Basic and acidic residues predominate over residues 370 to 379 (QQRVLGEEKM). The segment at 370-411 (QQRVLGEEKMLNINKKQTTSPASKKPSQEGGKGGSEKPKRPV) is disordered. Phosphoserine is present on residues Ser389, Ser412, Ser433, Ser435, Ser484, Ser495, Ser546, Ser584, and Ser638. 3 DNA-binding regions (HMG box) span residues 407–475 (PKRP…GGER), 482–549 (PESP…SEMR), and 568–634 (KKPP…DLWV). The segment at 456-487 (YKAREAALKAQSERKPGGEREDRGKLPESPKR) is disordered. The segment covering 457 to 487 (KAREAALKAQSERKPGGEREDRGKLPESPKR) has biased composition (basic and acidic residues). The segment at 546–576 (SEMRAPPAATNSSKKMKFQGEPKKPPMNGYQ) is disordered. Residues 649-765 (ISNKRKNMTK…SGDSSDSGSN (117 aa)) form a disordered region. Residues 664-674 (PKSSRTTLQSK) are compositionally biased toward polar residues. The segment covering 677-746 (SEEDDDEEEE…DDDEDEDNES (70 aa)) has biased composition (acidic residues). The segment covering 747–765 (EGSSSSSSSSGDSSDSGSN) has biased composition (low complexity).

Homodimer. Part of Pol I pre-initiation complex (PIC), in which Pol I core assembles with RRN3 and promoter-bound UTBF and SL1/TIF-IB complex. Interacts with TOP2A in the context of Pol I complex. Interacts with TBP. Interacts with TAF1A. Interacts with RASL11A. Binds to IRS1 and PIK3CA. Interacts with DHX33. Interacts with PHF6. Interacts with CEBPA (isoform 1 and isoform 4). Interacts with DDX11. Interacts with NOP53. Interacts with ALKBH2. Phosphorylated and activated by PIK3CA.

It is found in the nucleus. The protein localises to the nucleolus. Recognizes the ribosomal RNA gene promoter and activates transcription mediated by RNA polymerase I through cooperative interactions with the transcription factor SL1/TIF-IB complex. It binds specifically to the upstream control element. The sequence is that of Nucleolar transcription factor 1 (Ubtf) from Mus musculus (Mouse).